The chain runs to 457 residues: Ribosomal RNA-processing protein 8 (457 aa).

Disordered stretches follow at residues 52 to 114 and 148 to 235; these read LSQQ…EVER and SLNS…QETR. A phosphoserine mark is found at S62, S64, and S105. Residues 148-165 are compositionally biased toward polar residues; the sequence is SLNSVDQTVHNSRTSTAT. A phosphoserine mark is found at S172 and S177. Over residues 174–183 the composition is skewed to polar residues; the sequence is ESASPNSSHT. Positions 184 to 203 are enriched in basic residues; it reads LSRKQWRNRQKNKRRHKNKF. The S-adenosyl-L-methionine site is built by H282, G317, D335, D347, M348, and C364.

The protein belongs to the methyltransferase superfamily. RRP8 family. Component of the eNoSC complex, composed of SIRT1, SUV39H1 and RRP8.

The protein localises to the nucleus. The protein resides in the nucleolus. Its function is as follows. Essential component of the eNoSC (energy-dependent nucleolar silencing) complex, a complex that mediates silencing of rDNA in response to intracellular energy status and acts by recruiting histone-modifying enzymes. The eNoSC complex is able to sense the energy status of cell: upon glucose starvation, elevation of NAD(+)/NADP(+) ratio activates SIRT1, leading to histone H3 deacetylation followed by dimethylation of H3 at 'Lys-9' (H3K9me2) by SUV39H1 and the formation of silent chromatin in the rDNA locus. In the complex, RRP8 binds to H3K9me2 and probably acts as a methyltransferase. Its substrates are however unknown. The protein is Ribosomal RNA-processing protein 8 (Rrp8) of Rattus norvegicus (Rat).